The primary structure comprises 290 residues: Ribosomal RNA small subunit methyltransferase A (290 aa).

S-adenosyl-L-methionine-binding residues include N27, L29, G54, E75, D100, and N125.

The protein belongs to the class I-like SAM-binding methyltransferase superfamily. rRNA adenine N(6)-methyltransferase family. RsmA subfamily.

It is found in the cytoplasm. It carries out the reaction adenosine(1518)/adenosine(1519) in 16S rRNA + 4 S-adenosyl-L-methionine = N(6)-dimethyladenosine(1518)/N(6)-dimethyladenosine(1519) in 16S rRNA + 4 S-adenosyl-L-homocysteine + 4 H(+). Specifically dimethylates two adjacent adenosines (A1518 and A1519) in the loop of a conserved hairpin near the 3'-end of 16S rRNA in the 30S particle. May play a critical role in biogenesis of 30S subunits. In Streptococcus pyogenes serotype M1, this protein is Ribosomal RNA small subunit methyltransferase A.